Consider the following 76-residue polypeptide: Small ribosomal subunit protein uS17 (76 aa).

It belongs to the universal ribosomal protein uS17 family. In terms of assembly, part of the 30S ribosomal subunit.

One of the primary rRNA binding proteins, it binds specifically to the 5'-end of 16S ribosomal RNA. The polypeptide is Small ribosomal subunit protein uS17 (Anaplasma phagocytophilum (strain HZ)).